The following is a 180-amino-acid chain: Ubiquitin-conjugating enzyme E2 20 (180 aa).

Residues 1-33 (MAAVNGYQGNTPADPPASNGSKQPAAPTKTVDS) form a disordered region. Residues 35–180 (SVLKRLQSEL…VEKLYKPPSA (146 aa)) form the UBC core domain. Cysteine 119 functions as the Glycyl thioester intermediate in the catalytic mechanism.

Belongs to the ubiquitin-conjugating enzyme family. As to expression, expressed in all tissues with cell division activities and in mature leaves.

It catalyses the reaction S-ubiquitinyl-[E1 ubiquitin-activating enzyme]-L-cysteine + [E2 ubiquitin-conjugating enzyme]-L-cysteine = [E1 ubiquitin-activating enzyme]-L-cysteine + S-ubiquitinyl-[E2 ubiquitin-conjugating enzyme]-L-cysteine.. The protein operates within protein modification; protein ubiquitination. In terms of biological role, accepts the ubiquitin from the E1 complex and catalyzes its covalent attachment to other proteins. In Arabidopsis thaliana (Mouse-ear cress), this protein is Ubiquitin-conjugating enzyme E2 20 (UBC20).